A 494-amino-acid chain; its full sequence is MIKFALALTLCLAGASLSLAQHNPQWWGNRNTIVHLFEWKWADIAEECEDFLAPRGFAGVQVSPVNENIISPGRPWWERYQPISYKLTTRSGNEEEFADMVRRCNDVGIRIYVDVLLNHMSGDFDGVAVGTAGTEAEPSKKSFPGVPYSAQDFHPSCEITDWNDRYQVQNCELVGLKDLNQHSDYVRSKLIEFLDHLIELGVAGFRVDAAKHMASEDLEYIYDNLSNLNIEHGFPHNARAFIFQEVIDHGHETVSREEYNGLGAVTEFRFSEEIGRAFRGNNALKWLQSWGTGWGFLDSDQALTFVDNHDNQRDQGSVLNYKSPKQYKMATAFHLAYPYGISRVMSSFAFDDHDTPPPQDAQENIISPEFGEDGGCLNGWICEHRWRQIYAMVGFKNAVRDTELSEWWDNGDNQIAFCRGNKGFLAINNNLYDLSQELNTCLPAGEYCDVISGSLIDGACTGKSVRVNERGYGYIHIGADEFDGVLALHVDAKV.

The signal sequence occupies residues methionine 1–alanine 20. Glutamine 21 bears the Pyrrolidone carboxylic acid mark. A disulfide bond links cysteine 48 and cysteine 104. Positions 118, 169, and 178 each coordinate Ca(2+). Cysteine 157 and cysteine 171 are disulfide-bonded. Position 206 (arginine 206) interacts with chloride. Aspartate 208 serves as the catalytic Nucleophile. Ca(2+) is bound at residue histidine 212. Catalysis depends on glutamate 245, which acts as the Proton donor. Residues asparagine 308 and arginine 343 each contribute to the chloride site. Disulfide bonds link cysteine 376–cysteine 382, cysteine 418–cysteine 441, and cysteine 448–cysteine 460.

Belongs to the glycosyl hydrolase 13 family. In terms of assembly, monomer. Requires Ca(2+) as cofactor. Chloride is required as a cofactor.

The protein resides in the secreted. It carries out the reaction Endohydrolysis of (1-&gt;4)-alpha-D-glucosidic linkages in polysaccharides containing three or more (1-&gt;4)-alpha-linked D-glucose units.. The sequence is that of Alpha-amylase-related protein (Amyrel) from Drosophila auraria (Fruit fly).